The primary structure comprises 693 residues: Elongation factor G (693 aa).

The region spanning 8 to 283 (NRIRNIGIAA…AVIDYLPAPT (276 aa)) is the tr-type G domain. Residues 17-24 (AHIDAGKT), 81-85 (DTPGH), and 135-138 (NKMD) each bind GTP.

Belongs to the TRAFAC class translation factor GTPase superfamily. Classic translation factor GTPase family. EF-G/EF-2 subfamily.

The protein localises to the cytoplasm. In terms of biological role, catalyzes the GTP-dependent ribosomal translocation step during translation elongation. During this step, the ribosome changes from the pre-translocational (PRE) to the post-translocational (POST) state as the newly formed A-site-bound peptidyl-tRNA and P-site-bound deacylated tRNA move to the P and E sites, respectively. Catalyzes the coordinated movement of the two tRNA molecules, the mRNA and conformational changes in the ribosome. The protein is Elongation factor G of Wolinella succinogenes (strain ATCC 29543 / DSM 1740 / CCUG 13145 / JCM 31913 / LMG 7466 / NCTC 11488 / FDC 602W) (Vibrio succinogenes).